Consider the following 432-residue polypeptide: Glutamyl-tRNA reductase (432 aa).

Substrate-binding positions include 50–53 (TCNR), Ser110, 115–117 (ETQ), and Gln121. Cys51 functions as the Nucleophile in the catalytic mechanism. An NADP(+)-binding site is contributed by 190–195 (GAGEMG).

The protein belongs to the glutamyl-tRNA reductase family. In terms of assembly, homodimer.

The enzyme catalyses (S)-4-amino-5-oxopentanoate + tRNA(Glu) + NADP(+) = L-glutamyl-tRNA(Glu) + NADPH + H(+). Its pathway is porphyrin-containing compound metabolism; protoporphyrin-IX biosynthesis; 5-aminolevulinate from L-glutamyl-tRNA(Glu): step 1/2. In terms of biological role, catalyzes the NADPH-dependent reduction of glutamyl-tRNA(Glu) to glutamate 1-semialdehyde (GSA). This is Glutamyl-tRNA reductase from Nitratiruptor sp. (strain SB155-2).